Consider the following 155-residue polypeptide: Cytochrome c-550 (155 aa).

A signal peptide spans 1-20 (MKISIYATLAAITLALPAAA). Glutamine 21 is subject to Pyrrolidone carboxylic acid. Heme c contacts are provided by cysteine 35, cysteine 38, histidine 39, and methionine 120. Positions 150 to 155 (AEGESN) are excised as a propeptide.

Binds 1 heme c group covalently per subunit.

In Paracoccus denitrificans, this protein is Cytochrome c-550 (cycA).